The primary structure comprises 207 residues: Vexin (207 aa).

Residues 55–102 (LELLPHRGDRRDPGDGRRFGRLQTARPPTAHPAKASARPVGISEPKTS) are disordered. The segment covering 58–72 (LPHRGDRRDPGDGRR) has biased composition (basic and acidic residues).

It belongs to the vexin family.

It localises to the cell membrane. The protein resides in the nucleus. Required for neurogenesis in the neural plate and retina. Strongly cooperates with neural bHLH factors to promote neurogenesis. In Pongo abelii (Sumatran orangutan), this protein is Vexin.